We begin with the raw amino-acid sequence, 656 residues long: Threonine--tRNA ligase (656 aa).

Positions 1 to 64 (MAEAASLTFP…ERSGKIEIIT (64 aa)) constitute a TGS domain. Residues 246–548 (DHRRLGREMD…LIENYAGHFP (303 aa)) are catalytic. Zn(2+) is bound by residues C342, H393, and H525.

Belongs to the class-II aminoacyl-tRNA synthetase family. As to quaternary structure, homodimer. Requires Zn(2+) as cofactor.

The protein resides in the cytoplasm. The catalysed reaction is tRNA(Thr) + L-threonine + ATP = L-threonyl-tRNA(Thr) + AMP + diphosphate + H(+). Its function is as follows. Catalyzes the attachment of threonine to tRNA(Thr) in a two-step reaction: L-threonine is first activated by ATP to form Thr-AMP and then transferred to the acceptor end of tRNA(Thr). Also edits incorrectly charged L-seryl-tRNA(Thr). The chain is Threonine--tRNA ligase from Chelativorans sp. (strain BNC1).